The following is a 364-amino-acid chain: Solute carrier family 35 member C2 (364 aa).

2 consecutive transmembrane segments (helical) span residues 14–34 and 42–62; these read AALT…ITFY and FHFP…FSAL. An N-linked (GlcNAc...) asparagine glycan is attached at N102. The next 7 membrane-spanning stretches (helical) occupy residues 104-124, 136-156, 166-186, 202-222, 238-258, 272-292, and 295-315; these read SFLY…VLFI, LRAA…MFTY, FALV…TQIL, FHLQ…FEGL, LLLW…GLGF, LSIA…HLLG, and ISLL…LHVA. Phosphoserine is present on residues S335 and S336.

The protein belongs to the TPT transporter family. SLC35C subfamily.

Its subcellular location is the golgi apparatus. The protein resides in the cis-Golgi network membrane. It localises to the endoplasmic reticulum-Golgi intermediate compartment membrane. Its function is as follows. May play an important role in the cellular response to tissue hypoxia. May be either a GDP-fucose transporter that competes with SLC35C1 for GDP-fucose, or a factor that otherwise enhances the fucosylation of Notch and is required for optimal Notch signaling in mammalian cells. The sequence is that of Solute carrier family 35 member C2 (Slc35c2) from Mus musculus (Mouse).